Consider the following 1755-residue polypeptide: Transposon Ty1-GR3 Gag-Pol polyprotein (1755 aa).

3 stretches are compositionally biased toward polar residues: residues 1–10, 48–60, and 127–152; these read MESQQLSNYP, TKAN…TPAS, and QSQF…GNTF. Disordered regions lie at residues 1-93, 126-173, and 352-421; these read MESQ…MMTQ, PQSQ…RPPP, and GSRN…SKST. Positions 153–165 are enriched in low complexity; sequence TDSSSADSDMTST. Positions 299-401 are RNA-binding; sequence NNGIHINNKV…NSKSKTARAH (103 aa). Low complexity predominate over residues 402–418; it reads NVSTSNNSPSTDNDSIS. Residue S416 is modified to Phosphoserine. The active-site For protease activity; shared with dimeric partner is D461. The interval 583–640 is integrase-type zinc finger-like; that stretch reads NVHTSESTRKYPYPFIHRMLAHANAQTIRYSLKNNTITYFNESDVDWSSAIDYQCPDC. Positions 660-835 constitute an Integrase catalytic domain; sequence NSYEPFQYLH…AGLDISTLLP (176 aa). Mg(2+) is bound by residues D671 and D736. A disordered region spans residues 956–1172; that stretch reads SKAVSPTDST…LGGIGDSNAY (217 aa). The segment covering 960–969 has biased composition (low complexity); the sequence is SPTDSTPPST. Composition is skewed to polar residues over residues 1005-1015 and 1031-1043; these read STPQISNIEST and MSQS…SYAS. Residues 1044–1053 are compositionally biased toward basic and acidic residues; that stretch reads KSKDFRHSDS. 2 stretches are compositionally biased toward polar residues: residues 1054–1082 and 1095–1106; these read YSDN…QTSE and SIDTSSSESNSL. The Bipartite nuclear localization signal motif lies at 1178 to 1212; that stretch reads KKRSLEDNETEIKVSRDTWNTKNMRSLEPPRSKKR. The 139-residue stretch at 1338–1476 folds into the Reverse transcriptase Ty1/copia-type domain; sequence NNYYITQLDI…DILGLEIKYQ (139 aa). Mg(2+) is bound by residues D1346, D1427, D1428, D1610, E1652, and D1685. The region spanning 1610–1752 is the RNase H Ty1/copia-type domain; sequence DASYGNQPYY…IKTFKLLTNK (143 aa).

In terms of assembly, the capsid protein forms a homotrimer, from which the VLPs are assembled. The protease is a homodimer, whose active site consists of two apposed aspartic acid residues. Post-translationally, initially, virus-like particles (VLPs) are composed of the structural unprocessed proteins Gag and Gag-Pol, and also contain the host initiator methionine tRNA (tRNA(i)-Met) which serves as a primer for minus-strand DNA synthesis, and a dimer of genomic Ty RNA. Processing of the polyproteins occurs within the particle and proceeds by an ordered pathway, called maturation. First, the protease (PR) is released by autocatalytic cleavage of the Gag-Pol polyprotein yielding capsid protein p45 and a Pol-p154 precursor protein. This cleavage is a prerequisite for subsequent processing of Pol-p154 at the remaining sites to release the mature structural and catalytic proteins. Maturation takes place prior to the RT reaction and is required to produce transposition-competent VLPs.

The protein localises to the cytoplasm. Its subcellular location is the nucleus. The enzyme catalyses DNA(n) + a 2'-deoxyribonucleoside 5'-triphosphate = DNA(n+1) + diphosphate. The catalysed reaction is Endonucleolytic cleavage to 5'-phosphomonoester.. Capsid protein (CA) is the structural component of the virus-like particle (VLP), forming the shell that encapsulates the retrotransposons dimeric RNA genome. The particles are assembled from trimer-clustered units and there are holes in the capsid shells that allow for the diffusion of macromolecules. CA also has nucleocapsid-like chaperone activity, promoting primer tRNA(i)-Met annealing to the multipartite primer-binding site (PBS), dimerization of Ty1 RNA and initiation of reverse transcription. In terms of biological role, the aspartyl protease (PR) mediates the proteolytic cleavages of the Gag and Gag-Pol polyproteins after assembly of the VLP. Functionally, reverse transcriptase/ribonuclease H (RT) is a multifunctional enzyme that catalyzes the conversion of the retro-elements RNA genome into dsDNA within the VLP. The enzyme displays a DNA polymerase activity that can copy either DNA or RNA templates, and a ribonuclease H (RNase H) activity that cleaves the RNA strand of RNA-DNA heteroduplexes during plus-strand synthesis and hydrolyzes RNA primers. The conversion leads to a linear dsDNA copy of the retrotransposon that includes long terminal repeats (LTRs) at both ends. Its function is as follows. Integrase (IN) targets the VLP to the nucleus, where a subparticle preintegration complex (PIC) containing at least integrase and the newly synthesized dsDNA copy of the retrotransposon must transit the nuclear membrane. Once in the nucleus, integrase performs the integration of the dsDNA into the host genome. This chain is Transposon Ty1-GR3 Gag-Pol polyprotein (TY1B-GR3), found in Saccharomyces cerevisiae (strain ATCC 204508 / S288c) (Baker's yeast).